A 263-amino-acid chain; its full sequence is uncharacterized protein (263 aa).

An N-terminal signal peptide occupies residues 1–22 (MEYLKRLALLISVIILTIFIMG). Cys-23 is lipidated: N-palmitoyl cysteine. A lipid anchor (S-diacylglycerol cysteine) is attached at Cys-23.

It belongs to the staphylococcal tandem lipoprotein family.

Its subcellular location is the cell membrane. This is an uncharacterized protein from Staphylococcus aureus (strain COL).